Reading from the N-terminus, the 132-residue chain is UPF0299 membrane protein Ent638_2744 (132 aa).

4 consecutive transmembrane segments (helical) span residues 8 to 28 (VWQY…GIFI), 31 to 51 (LLPI…LLLA), 63 to 83 (GCFV…VGVM), and 93 to 113 (FGPI…VVSW).

This sequence belongs to the UPF0299 family.

It localises to the cell inner membrane. This is UPF0299 membrane protein Ent638_2744 from Enterobacter sp. (strain 638).